The chain runs to 51 residues: Large ribosomal subunit protein eL39 (51 aa).

Belongs to the eukaryotic ribosomal protein eL39 family.

This chain is Large ribosomal subunit protein eL39, found in Thermococcus sibiricus (strain DSM 12597 / MM 739).